The chain runs to 150 residues: Sec-independent protein translocase protein TatB (150 aa).

A helical membrane pass occupies residues Met1–Gly21. Over residues Lys77–Gly86 the composition is skewed to basic and acidic residues. Positions Lys77–Asp150 are disordered. Over residues Ala109 to Ser135 the composition is skewed to pro residues.

Belongs to the TatB family. The Tat system comprises two distinct complexes: a TatABC complex, containing multiple copies of TatA, TatB and TatC subunits, and a separate TatA complex, containing only TatA subunits. Substrates initially bind to the TatABC complex, which probably triggers association of the separate TatA complex to form the active translocon.

It is found in the cell inner membrane. Its function is as follows. Part of the twin-arginine translocation (Tat) system that transports large folded proteins containing a characteristic twin-arginine motif in their signal peptide across membranes. Together with TatC, TatB is part of a receptor directly interacting with Tat signal peptides. TatB may form an oligomeric binding site that transiently accommodates folded Tat precursor proteins before their translocation. This chain is Sec-independent protein translocase protein TatB, found in Rhodospirillum rubrum (strain ATCC 11170 / ATH 1.1.1 / DSM 467 / LMG 4362 / NCIMB 8255 / S1).